Here is a 276-residue protein sequence, read N- to C-terminus: Cerberus (276 aa).

An N-terminal signal peptide occupies residues 1 to 20; it reads MLLCVLKIYIIFCLVNDGAG. N-linked (GlcNAc...) asparagine glycosylation is found at Asn103, Asn118, and Asn160. 4 disulfides stabilise this stretch: Cys175-Cys221, Cys189-Cys235, Cys199-Cys251, and Cys203-Cys253. Residues 175–259 enclose the CTCK domain; that stretch reads CKTLPFTQNI…ECACEAHKNN (85 aa). Asn234 is a glycosylation site (N-linked (GlcNAc...) asparagine).

It belongs to the DAN family. The long chain interacts with nodal/nr-1, bmp4 and wnt8, thereby inhibiting their function. The short chain interacts with nodal/nr-1 but not bmp4 or wnt8. Expressed in the anterior endomesoderm of the early gastrula with expression expanded laterally around the margin at the endoderm/mesoderm boundary.

It localises to the secreted. Inhibits wnt, nodal/nr-1 and bmp signaling in the embryo to promote head formation and anterior neural induction. Within the endoderm, acts as an essential mediator of nodal/nr-1-induced cardiogenesis in the overlying mesoderm. The polypeptide is Cerberus (Xenopus tropicalis (Western clawed frog)).